Consider the following 332-residue polypeptide: Putative pumilio homolog 17 (332 aa).

Residues 1 to 302 (MTNINRLSMS…ILTADLFYSL (302 aa)) form the PUM-HD domain. One copy of the Pumilio 1 repeat lies at 82-117 (SDSDYFMVITRNKNGSKSLQKLMRMSDDMDVFFFVA). A Pumilio 2; degenerate repeat occupies 118-152 (IMRLFIHVMIDKYASYVAIQGMRIFKQDKRELMYD). Pumilio repeat units follow at residues 153 to 188 (HILR…DELM), 189 to 225 (DIVS…NIAD), 226 to 264 (KLCG…DLLA), and 265 to 300 (CKTE…DLFY).

The protein localises to the cytoplasm. Functionally, sequence-specific RNA-binding protein that regulates translation and mRNA stability by binding the 3'-UTR of target mRNAs. This is Putative pumilio homolog 17 (APUM17) from Arabidopsis thaliana (Mouse-ear cress).